Consider the following 1010-residue polypeptide: Retinoblastoma-related protein 1 (1010 aa).

The disordered stretch occupies residues 1-23; the sequence is MEGAAPPASSGSEVTGAGSGKVD. The domain A stretch occupies residues 419–619; the sequence is TPVSTAMTTA…EKGSSMYNSL (201 aa). The pocket stretch occupies residues 419-861; the sequence is TPVSTAMTTA…NEVFIPTVKP (443 aa). Residues 620-730 are spacer; the sequence is IVARPTLSAE…PAAGGELCAE (111 aa). The tract at residues 657 to 679 is disordered; sequence LPPLPFQKQEHSPDKDEVRSPKR. Residues 664–679 show a composition bias toward basic and acidic residues; it reads KQEHSPDKDEVRSPKR. The tract at residues 731 to 861 is domain B; it reads TGIGVFLSKI…NEVFIPTVKP (131 aa). The tract at residues 868 to 898 is disordered; that stretch reads SGTSPNKKNEEKCAADGPYPESPRLSRFPNL.

The protein belongs to the retinoblastoma protein (RB) family.

It localises to the nucleus. In terms of biological role, regulator of biological processes that recruits a histone deacetylase to control gene transcription. May play a role in the entry into mitosis, negatively regulating the cell proliferation. Formation of stable complexes with geminiviridae replication-associated proteins may create a cellular environment which favors viral DNA replication. This is Retinoblastoma-related protein 1 (RBR1) from Oryza sativa subsp. japonica (Rice).